We begin with the raw amino-acid sequence, 178 residues long: Probable chorismate pyruvate-lyase (178 aa).

Substrate is bound by residues Met-37, Arg-78, Leu-114, and Glu-165.

This sequence belongs to the UbiC family.

The protein resides in the cytoplasm. It carries out the reaction chorismate = 4-hydroxybenzoate + pyruvate. The protein operates within cofactor biosynthesis; ubiquinone biosynthesis. In terms of biological role, removes the pyruvyl group from chorismate, with concomitant aromatization of the ring, to provide 4-hydroxybenzoate (4HB) for the ubiquinone pathway. This Aeromonas hydrophila subsp. hydrophila (strain ATCC 7966 / DSM 30187 / BCRC 13018 / CCUG 14551 / JCM 1027 / KCTC 2358 / NCIMB 9240 / NCTC 8049) protein is Probable chorismate pyruvate-lyase.